The primary structure comprises 387 residues: Type 2 DNA topoisomerase 6 subunit A (387 aa).

Residues 12 to 160 (EARKKALAVF…MLILSKEKGK (149 aa)) form the Topo IIA-type catalytic domain. Tyr106 acts as the O-(5'-phospho-DNA)-tyrosine intermediate in catalysis. Residues Glu207 and Asp259 each coordinate Mg(2+).

This sequence belongs to the TOP6A family. Homodimer. Heterotetramer of two Top6A and two Top6B chains. The cofactor is Mg(2+).

The enzyme catalyses ATP-dependent breakage, passage and rejoining of double-stranded DNA.. Relaxes both positive and negative superturns and exhibits a strong decatenase activity. The sequence is that of Type 2 DNA topoisomerase 6 subunit A from Hyperthermus butylicus (strain DSM 5456 / JCM 9403 / PLM1-5).